A 160-amino-acid polypeptide reads, in one-letter code: Major strawberry allergen Fra a 1-2 (160 aa).

This sequence belongs to the BetVI family. In terms of assembly, monomer. Interacts with AP. Highly expressed in ripe red fruits. Expressed in roots and white fruits. Expressed at low levels in open flowers.

Its function is as follows. Involved in the control of flavonoid biosynthesis in fruits, probably by binding directly to natural flavonoids. Binds the natural flavonoid myricetin with affinities in the low micromolar range. In Fragaria ananassa (Strawberry), this protein is Major strawberry allergen Fra a 1-2.